Consider the following 259-residue polypeptide: 3-deoxy-manno-octulosonate cytidylyltransferase 1 (259 aa).

This sequence belongs to the KdsB family.

Its subcellular location is the cytoplasm. The enzyme catalyses 3-deoxy-alpha-D-manno-oct-2-ulosonate + CTP = CMP-3-deoxy-beta-D-manno-octulosonate + diphosphate. It functions in the pathway nucleotide-sugar biosynthesis; CMP-3-deoxy-D-manno-octulosonate biosynthesis; CMP-3-deoxy-D-manno-octulosonate from 3-deoxy-D-manno-octulosonate and CTP: step 1/1. It participates in bacterial outer membrane biogenesis; lipopolysaccharide biosynthesis. Activates KDO (a required 8-carbon sugar) for incorporation into bacterial lipopolysaccharide in Gram-negative bacteria. This is 3-deoxy-manno-octulosonate cytidylyltransferase 1 from Hydrogenovibrio crunogenus (strain DSM 25203 / XCL-2) (Thiomicrospira crunogena).